Consider the following 372-residue polypeptide: Innexin-16 (372 aa).

A run of 4 helical transmembrane segments spans residues 31–51 (VVTT…NYVG), 106–126 (VPFL…FWII), 181–201 (LVMK…LNSF), and 263–283 (IFIF…GDFV). N-linked (GlcNAc...) asparagine glycosylation occurs at asparagine 352.

This sequence belongs to the pannexin family.

The protein localises to the cell membrane. It localises to the cell junction. Its subcellular location is the gap junction. Functionally, structural component of the gap junctions. Required for signals downstream of defecation clock. The protein is Innexin-16 (inx-16) of Caenorhabditis elegans.